Here is a 107-residue protein sequence, read N- to C-terminus: Essential MCU regulator, mitochondrial (107 aa).

The transit peptide at 1-47 (MASGAARWLALVRVGSGASRSWLSLRKGGDVSAGRSCSGQSLVPTRS) directs the protein to the mitochondrion. Residues 48-65 (VIVTRSGAILPKPVKMSF) lie on the Mitochondrial matrix side of the membrane. Residues 66–85 (GLLRVFSIVIPFLYVGTLIS) form a helical membrane-spanning segment. A GXXXX[G/A/S] motif is present at residues 81 to 85 (GTLIS). Topologically, residues 86-107 (KNFAALLEEHDIFVPEDDDDDD) are mitochondrial intermembrane.

The protein belongs to the SMDT1/EMRE family. Component of the uniplex complex, composed of MCU, EMRE/SMDT1, MICU1 and MICU2 (or MICU3) in a 4:4:1:1 stoichiometry. The number of EMRE/SMDT1 molecules is hovewer variable, ranging from 1 to 4 copies per uniplex complex, leading to uniplex complexes with distinct gatekeeping profiles. Interacts (via its C-terminal poly-Asp tail) with MCUR1; the interaction is direct. Unprocessed form interacts (via transit peptide) with MAIP1. In terms of processing, undergoes proteolytic degradation in neurons: degraded by AFG3L2 and SPG7 before SMDT1/EMRE assembly with the uniporter complex, limiting the availability of SMDT1/EMRE for MCU assembly and promoting efficient assembly of gatekeeper subunits with MCU.

Its subcellular location is the mitochondrion inner membrane. Functionally, essential regulatory subunit of the mitochondrial calcium uniporter complex (uniplex), a complex that mediates calcium uptake into mitochondria. Required to bridge the calcium-sensing proteins MICU1 with the calcium-conducting subunit MCU. Acts by mediating activation of MCU and retention of MICU1 to the MCU pore, in order to ensure tight regulation of the uniplex complex and appropriate responses to intracellular calcium signaling. The chain is Essential MCU regulator, mitochondrial from Bos taurus (Bovine).